The chain runs to 201 residues: FMN-dependent NADH:quinone oxidoreductase (201 aa).

Residues S10, 16–18, 96–99, and 140–143 contribute to the FMN site; these read SQS, MYNF, and SRGG.

The protein belongs to the azoreductase type 1 family. As to quaternary structure, homodimer. FMN is required as a cofactor.

It catalyses the reaction 2 a quinone + NADH + H(+) = 2 a 1,4-benzosemiquinone + NAD(+). The catalysed reaction is N,N-dimethyl-1,4-phenylenediamine + anthranilate + 2 NAD(+) = 2-(4-dimethylaminophenyl)diazenylbenzoate + 2 NADH + 2 H(+). Its function is as follows. Quinone reductase that provides resistance to thiol-specific stress caused by electrophilic quinones. Functionally, also exhibits azoreductase activity. Catalyzes the reductive cleavage of the azo bond in aromatic azo compounds to the corresponding amines. The polypeptide is FMN-dependent NADH:quinone oxidoreductase (Yersinia enterocolitica serotype O:8 / biotype 1B (strain NCTC 13174 / 8081)).